A 429-amino-acid polypeptide reads, in one-letter code: Glucose-1-phosphate adenylyltransferase (429 aa).

Residues Gly-162, Glu-177 to Lys-178, and Ser-209 contribute to the alpha-D-glucose 1-phosphate site.

The protein belongs to the bacterial/plant glucose-1-phosphate adenylyltransferase family. As to quaternary structure, homotetramer.

It catalyses the reaction alpha-D-glucose 1-phosphate + ATP + H(+) = ADP-alpha-D-glucose + diphosphate. It participates in glycan biosynthesis; glycogen biosynthesis. Its function is as follows. Involved in the biosynthesis of ADP-glucose, a building block required for the elongation reactions to produce glycogen. Catalyzes the reaction between ATP and alpha-D-glucose 1-phosphate (G1P) to produce pyrophosphate and ADP-Glc. The protein is Glucose-1-phosphate adenylyltransferase of Rippkaea orientalis (strain PCC 8801 / RF-1) (Cyanothece sp. (strain PCC 8801)).